Here is a 549-residue protein sequence, read N- to C-terminus: Pyrophosphate--fructose 6-phosphate 1-phosphotransferase (549 aa).

Gly78 contributes to the diphosphate binding site. Asp172 lines the Mg(2+) pocket. Substrate contacts are provided by residues 200-202, 239-240, 247-249, Glu308, and 421-424; these read TID, KY, MGR, and YEGR. Catalysis depends on Asp202, which acts as the Proton acceptor.

Belongs to the phosphofructokinase type A (PFKA) family. PPi-dependent PFK group II subfamily. Clade 'Long' sub-subfamily. Homodimer. Requires Mg(2+) as cofactor.

The protein localises to the cytoplasm. It carries out the reaction beta-D-fructose 6-phosphate + diphosphate = beta-D-fructose 1,6-bisphosphate + phosphate + H(+). Its pathway is carbohydrate degradation; glycolysis; D-glyceraldehyde 3-phosphate and glycerone phosphate from D-glucose: step 3/4. With respect to regulation, non-allosteric. In terms of biological role, catalyzes the phosphorylation of D-fructose 6-phosphate, the first committing step of glycolysis. Uses inorganic phosphate (PPi) as phosphoryl donor instead of ATP like common ATP-dependent phosphofructokinases (ATP-PFKs), which renders the reaction reversible, and can thus function both in glycolysis and gluconeogenesis. Consistently, PPi-PFK can replace the enzymes of both the forward (ATP-PFK) and reverse (fructose-bisphosphatase (FBPase)) reactions. This is Pyrophosphate--fructose 6-phosphate 1-phosphotransferase from Porphyromonas gingivalis (Bacteroides gingivalis).